We begin with the raw amino-acid sequence, 143 residues long: ATP synthase F(0) complex subunit C2, mitochondrial (143 aa).

Residues 1–68 constitute a mitochondrion transit peptide; the sequence is MYTCAKFVST…RSFQTSAISR (68 aa). Residues 84–104 traverse the membrane as a helical segment; that stretch reads VGVAGSGAGIGTVFGSLIIGY. K111 carries the N6,N6,N6-trimethyllysine modification. A helical membrane pass occupies residues 119–139; sequence ILGFALSEAMGLFCLMVAFLI.

This sequence belongs to the ATPase C chain family. As to quaternary structure, F-type ATPases have 2 components, CF(1) - the catalytic core - and CF(0) - the membrane proton channel. CF(1) has five subunits: alpha(3), beta(3), gamma(1), delta(1), epsilon(1). CF(0) has three main subunits: a, b and c. Interacts with DNAJC30; interaction is direct. In terms of processing, trimethylated by ATPSCKMT at Lys-111. Methylation is required for proper incorporation of the C subunit into the ATP synthase complex and mitochondrial respiration.

The protein resides in the mitochondrion membrane. Mitochondrial membrane ATP synthase (F(1)F(0) ATP synthase or Complex V) produces ATP from ADP in the presence of a proton gradient across the membrane which is generated by electron transport complexes of the respiratory chain. F-type ATPases consist of two structural domains, F(1) - containing the extramembraneous catalytic core and F(0) - containing the membrane proton channel, linked together by a central stalk and a peripheral stalk. During catalysis, ATP synthesis in the catalytic domain of F(1) is coupled via a rotary mechanism of the central stalk subunits to proton translocation. Part of the complex F(0) domain. A homomeric c-ring of probably 10 subunits is part of the complex rotary element. This chain is ATP synthase F(0) complex subunit C2, mitochondrial, found in Bos taurus (Bovine).